The chain runs to 123 residues: Large ribosomal subunit protein bL20 (123 aa).

Basic residues predominate over residues 1-15 (MARVKRSVNAKKKRR). Residues 1–23 (MARVKRSVNAKKKRREVLDQASG) form a disordered region.

Belongs to the bacterial ribosomal protein bL20 family.

In terms of biological role, binds directly to 23S ribosomal RNA and is necessary for the in vitro assembly process of the 50S ribosomal subunit. It is not involved in the protein synthesizing functions of that subunit. The sequence is that of Large ribosomal subunit protein bL20 from Cutibacterium acnes (strain DSM 16379 / KPA171202) (Propionibacterium acnes).